Here is a 721-residue protein sequence, read N- to C-terminus: Catalase-peroxidase 1 (721 aa).

The tryptophyl-tyrosyl-methioninium (Trp-Tyr) (with M-249) cross-link spans 98-223 (WHAAGSYRVA…LAAVQMGLIY (126 aa)). The active-site Proton acceptor is H99. Positions 223 to 249 (YVNPEGVNGQPDPLRTAQDVRVTFGRM) form a cross-link, tryptophyl-tyrosyl-methioninium (Tyr-Met) (with W-98). Heme b is bound at residue H264.

It belongs to the peroxidase family. Peroxidase/catalase subfamily. Homodimer or homotetramer. Heme b serves as cofactor. Formation of the three residue Trp-Tyr-Met cross-link is important for the catalase, but not the peroxidase activity of the enzyme.

The enzyme catalyses H2O2 + AH2 = A + 2 H2O. It carries out the reaction 2 H2O2 = O2 + 2 H2O. Its function is as follows. Bifunctional enzyme with both catalase and broad-spectrum peroxidase activity. In Legionella pneumophila subsp. pneumophila (strain Philadelphia 1 / ATCC 33152 / DSM 7513), this protein is Catalase-peroxidase 1.